Reading from the N-terminus, the 553-residue chain is Dihydroxy-acid dehydratase (553 aa).

Position 78 (D78) interacts with Mg(2+). Residue C119 coordinates [2Fe-2S] cluster. The Mg(2+) site is built by D120 and K121. Position 121 is an N6-carboxylysine (K121). C193 contributes to the [2Fe-2S] cluster binding site. Residue E441 participates in Mg(2+) binding. The active-site Proton acceptor is the S467.

This sequence belongs to the IlvD/Edd family. Homodimer. Requires [2Fe-2S] cluster as cofactor. It depends on Mg(2+) as a cofactor.

It carries out the reaction (2R)-2,3-dihydroxy-3-methylbutanoate = 3-methyl-2-oxobutanoate + H2O. The catalysed reaction is (2R,3R)-2,3-dihydroxy-3-methylpentanoate = (S)-3-methyl-2-oxopentanoate + H2O. The protein operates within amino-acid biosynthesis; L-isoleucine biosynthesis; L-isoleucine from 2-oxobutanoate: step 3/4. It participates in amino-acid biosynthesis; L-valine biosynthesis; L-valine from pyruvate: step 3/4. Functions in the biosynthesis of branched-chain amino acids. Catalyzes the dehydration of (2R,3R)-2,3-dihydroxy-3-methylpentanoate (2,3-dihydroxy-3-methylvalerate) into 2-oxo-3-methylpentanoate (2-oxo-3-methylvalerate) and of (2R)-2,3-dihydroxy-3-methylbutanoate (2,3-dihydroxyisovalerate) into 2-oxo-3-methylbutanoate (2-oxoisovalerate), the penultimate precursor to L-isoleucine and L-valine, respectively. The polypeptide is Dihydroxy-acid dehydratase (Citrifermentans bemidjiense (strain ATCC BAA-1014 / DSM 16622 / JCM 12645 / Bem) (Geobacter bemidjiensis)).